Consider the following 129-residue polypeptide: Follitropin subunit beta (129 aa).

The first 20 residues, 1-20, serve as a signal peptide directing secretion; that stretch reads MKSLQFCFLFCCWKAICCNS. Disulfide bonds link Cys21–Cys69, Cys35–Cys84, Cys38–Cys122, Cys46–Cys100, Cys50–Cys102, and Cys105–Cys112. N-linked (GlcNAc...) asparagine glycans are attached at residues Asn25 and Asn42.

Belongs to the glycoprotein hormones subunit beta family. As to quaternary structure, heterodimer. The active follitropin is a heterodimer composed of an alpha chain/CGA shared with other hormones and a unique beta chain/FSHB shown here.

Its subcellular location is the secreted. In terms of biological role, together with the alpha chain CGA constitutes follitropin, the follicle-stimulating hormone, and provides its biological specificity to the hormone heterodimer. Binds FSHR, a G protein-coupled receptor, on target cells to activate downstream signaling pathways. Follitropin is involved in follicle development and spermatogenesis in reproductive organs. In Sus scrofa (Pig), this protein is Follitropin subunit beta (FSHB).